The sequence spans 222 residues: Protein-L-isoaspartate O-methyltransferase (222 aa).

The active site involves Ser70.

Belongs to the methyltransferase superfamily. L-isoaspartyl/D-aspartyl protein methyltransferase family.

Its subcellular location is the cytoplasm. The enzyme catalyses [protein]-L-isoaspartate + S-adenosyl-L-methionine = [protein]-L-isoaspartate alpha-methyl ester + S-adenosyl-L-homocysteine. In terms of biological role, catalyzes the methyl esterification of L-isoaspartyl residues in peptides and proteins that result from spontaneous decomposition of normal L-aspartyl and L-asparaginyl residues. It plays a role in the repair and/or degradation of damaged proteins. This chain is Protein-L-isoaspartate O-methyltransferase, found in Jannaschia sp. (strain CCS1).